Reading from the N-terminus, the 904-residue chain is Dynamin-like protein C (904 aa).

Positions 44–102 (IAEAMALKMHEEEKKKREEKKRKRDNEELLSKQVRTKLENERKKLDDSESINASTNQEL) form a coiled coil. A disordered region spans residues 53 to 93 (HEEEKKKREEKKRKRDNEELLSKQVRTKLENERKKLDDSES). Positions 67 to 90 (RDNEELLSKQVRTKLENERKKLDD) are enriched in basic and acidic residues. The 323-residue stretch at 119–441 (SFDTPELVVV…HEKYQQNLLP (323 aa)) folds into the Dynamin-type G domain. The interval 129 to 136 (GMQSDGKS) is G1 motif. A GTP-binding site is contributed by 129–136 (GMQSDGKS). Residues 155–157 (GTR) form a G2 motif region. The interval 169 to 227 (SKQQPSCRFKKEDYSNSYGGSSSSTSTTSGNSNHNTDKQQNVSSSQGGGGGSNNLNEDK) is disordered. Low complexity predominate over residues 183-213 (SNSYGGSSSSTSTTSGNSNHNTDKQQNVSSS). Residues 278 to 281 (DTPG) are G3 motif. Residues 278-282 (DTPGF) and 343-346 (TKFD) contribute to the GTP site. The segment at 343–346 (TKFD) is G4 motif. A G5 motif region spans residues 378–381 (LPLK). A coiled-coil region spans residues 781–811 (EMFQLGLKELENKLHKLEFQLIDCKKNRDKF). Disordered regions lie at residues 821-840 (SLNQNQNQNSSSSSNSASSS) and 853-904 (NGKF…FDQN). A compositionally biased stretch (polar residues) spans 853–876 (NGKFSTPDKNSLTMSPFTSPFTQS). Residues 877 to 891 (NYHQHNNNNYQINQQ) are compositionally biased toward low complexity.

The protein belongs to the TRAFAC class dynamin-like GTPase superfamily. Dynamin/Fzo/YdjA family.

The protein resides in the cytoplasm. It catalyses the reaction GTP + H2O = GDP + phosphate + H(+). Functionally, involved in cytokinesis. May hydrolyze GTP. This chain is Dynamin-like protein C (dlpC), found in Dictyostelium discoideum (Social amoeba).